Reading from the N-terminus, the 219-residue chain is RING finger protein nenya (219 aa).

Residues 6–48 (CNKCFRRRNVEPTLIFHMTQCQHVLCASCLSESSTDKKCPLCK) form an RING-type zinc finger. Residues 161 to 181 (NQARGLRPRTPSVTTSDNTQS) are disordered.

May interact with itself, with narya and vilya through its RING-type zinc finger.

Required for the formation of DNA double-strand breaks together with narya and vilya during the meiotic recombination process. Plays a redundant role with narya in chromosome segregation during female meiosis. The polypeptide is RING finger protein nenya (Drosophila melanogaster (Fruit fly)).